A 362-amino-acid polypeptide reads, in one-letter code: Adenosine deaminase (362 aa).

Zn(2+)-binding residues include His19 and His21. His21, Asp23, and Gly181 together coordinate substrate. Residue His208 participates in Zn(2+) binding. The Proton donor role is filled by Glu211. Asp300 lines the Zn(2+) pocket.

This sequence belongs to the metallo-dependent hydrolases superfamily. Adenosine and AMP deaminases family. Adenosine deaminase subfamily. It depends on Zn(2+) as a cofactor.

The enzyme catalyses adenosine + H2O + H(+) = inosine + NH4(+). It catalyses the reaction 2'-deoxyadenosine + H2O + H(+) = 2'-deoxyinosine + NH4(+). Functionally, catalyzes the hydrolytic deamination of adenosine and 2-deoxyadenosine. The polypeptide is Adenosine deaminase (Mycolicibacterium gilvum (strain PYR-GCK) (Mycobacterium gilvum (strain PYR-GCK))).